The chain runs to 326 residues: Virulence-associated V antigen (326 aa).

The protein localises to the secreted. In terms of biological role, involved in calcium regulation of yop expression, which includes the export process. This Yersinia pseudotuberculosis serotype I (strain IP32953) protein is Virulence-associated V antigen (lcrV).